We begin with the raw amino-acid sequence, 427 residues long: Endothelin-1 receptor (427 aa).

The N-terminal stretch at 1-20 (METFCFRVSFWVALLGCVIS) is a signal peptide. Residues 21–80 (DNPESHSTNLSTHVDDFTTFRGTEFSLVVTTHRPTNLALPSNGSMHNYCPQQTKITSAFK) lie on the Extracellular side of the membrane. N29 and N62 each carry an N-linked (GlcNAc...) asparagine glycan. The chain crosses the membrane as a helical span at residues 81–102 (YINTVISCTIFIVGMVGNATLL). Residues 103–112 (RIIYQNKCMR) are Cytoplasmic-facing. A helical transmembrane segment spans residues 113 to 132 (NGPNALIASLALGDLIYVVI). The Extracellular segment spans residues 133 to 159 (DLPINVFKLLAGRWPFENHDFGVFLCK). C158 and C239 are disulfide-bonded. The helical transmembrane segment at 160–181 (LFPFLQKSSVGITVLNLCALSV) threads the bilayer. Topologically, residues 182–205 (DRYRAVASWSRVQGIGIPLVTAIE) are cytoplasmic. Residues 206-229 (IVSIWILSFILAIPEAIGFVMVPF) traverse the membrane as a helical segment. Residues 230–256 (EYKGEEHKTCMLNATSKFMEFYQDVKD) are Extracellular-facing. Residues 257-278 (WWLFGFYFCMPLVCTAIFYTLM) traverse the membrane as a helical segment. Residues 279–306 (TCEMLNRRNGSLRIALSEHLKQRREVAK) are Cytoplasmic-facing. Residues 307–328 (TVFCLVVIFALCWFPLHLSRIL) form a helical membrane-spanning segment. The Extracellular portion of the chain corresponds to 329–347 (KKTVYDEMDKNRCELLSFL). Residues 348 to 372 (LLMDYIGINLATMNSCINPIALYFV) traverse the membrane as a helical segment. Residues 373–427 (SKKFKNCFQSCLCCCCYQSKSLMTSVPMNGTSIQWKNHEQNNHNTERSSHKDSIN) lie on the Cytoplasmic side of the membrane. A Phosphoserine modification is found at S425.

The protein belongs to the G-protein coupled receptor 1 family. Endothelin receptor subfamily. EDNRA sub-subfamily. In terms of assembly, interacts with HDAC7 and KAT5.

It localises to the cell membrane. Receptor for endothelin-1. Mediates its action by association with G proteins that activate a phosphatidylinositol-calcium second messenger system. The rank order of binding affinities for ET-A is: ET1 &gt; ET2 &gt;&gt; ET3. The protein is Endothelin-1 receptor of Sus scrofa (Pig).